Here is a 325-residue protein sequence, read N- to C-terminus: GMP reductase (325 aa).

The active-site Thioimidate intermediate is the C174. An NADP(+)-binding site is contributed by 203–226 (IIADGGIRTHGDIAKSIRFGATMV).

This sequence belongs to the IMPDH/GMPR family. GuaC type 2 subfamily.

The enzyme catalyses IMP + NH4(+) + NADP(+) = GMP + NADPH + 2 H(+). Functionally, catalyzes the irreversible NADPH-dependent deamination of GMP to IMP. It functions in the conversion of nucleobase, nucleoside and nucleotide derivatives of G to A nucleotides, and in maintaining the intracellular balance of A and G nucleotides. The polypeptide is GMP reductase (Helicobacter pylori (strain J99 / ATCC 700824) (Campylobacter pylori J99)).